The chain runs to 664 residues: Translation factor GUF1, mitochondrial (664 aa).

Residues 63–246 (SNYRNFSIVA…SIINNIPPPQ (184 aa)) enclose the tr-type G domain. Residues 72 to 79 (AHVDHGKS), 139 to 143 (DTPGH), and 193 to 196 (NKID) each bind GTP.

It belongs to the TRAFAC class translation factor GTPase superfamily. Classic translation factor GTPase family. LepA subfamily.

Its subcellular location is the mitochondrion inner membrane. It carries out the reaction GTP + H2O = GDP + phosphate + H(+). Its function is as follows. Promotes mitochondrial protein synthesis. May act as a fidelity factor of the translation reaction, by catalyzing a one-codon backward translocation of tRNAs on improperly translocated ribosomes. Binds to mitochondrial ribosomes in a GTP-dependent manner. This Clavispora lusitaniae (strain ATCC 42720) (Yeast) protein is Translation factor GUF1, mitochondrial.